Reading from the N-terminus, the 362-residue chain is Leucoanthocyanidin dioxygenase (362 aa).

The interval 1–23 is disordered; that stretch reads MVTSAMGPSPRVEELARSGLDTI. One can recognise a Fe2OG dioxygenase domain in the interval 214–313; it reads LIVQMKINFY…RISWAVFCEP (100 aa). Fe cation contacts are provided by histidine 238, aspartate 240, and histidine 294. Residue arginine 304 is part of the active site.

Belongs to the iron/ascorbate-dependent oxidoreductase family. Fe cation serves as cofactor. The cofactor is L-ascorbate. Expressed in red but not in green forma of P.frutescens. In red forma, it is predominantly expressed in stems and leaves, but not in roots.

The enzyme catalyses a (2R,3S,4S)-leucoanthocyanidin + 2-oxoglutarate + O2 = a 4-H-anthocyanidin with a 3-hydroxy group + succinate + CO2 + 2 H2O. It participates in pigment biosynthesis; anthocyanin biosynthesis. In terms of biological role, oxidation of leucoanthocyanidins into anthocyanidins. In Perilla frutescens (Beefsteak mint), this protein is Leucoanthocyanidin dioxygenase (ANS).